A 543-amino-acid polypeptide reads, in one-letter code: Probable ubiquitin-conjugating enzyme E2 26 (543 aa).

A disordered region spans residues 1 to 21 (MEPDVVEIPPPPLIASGSRTR). One can recognise a UBC core domain in the interval 271 to 431 (NWVKKVQADW…VFLLSLKTMV (161 aa)). The active-site Glycyl thioester intermediate is the Cys357. The tract at residues 514–543 (LAEKPEPPMSNANTENQSKKKTRKRSRSSR) is disordered. Over residues 532–543 (KKKTRKRSRSSR) the composition is skewed to basic residues.

Belongs to the ubiquitin-conjugating enzyme family.

It catalyses the reaction S-ubiquitinyl-[E1 ubiquitin-activating enzyme]-L-cysteine + [E2 ubiquitin-conjugating enzyme]-L-cysteine = [E1 ubiquitin-activating enzyme]-L-cysteine + S-ubiquitinyl-[E2 ubiquitin-conjugating enzyme]-L-cysteine.. The protein operates within protein modification; protein ubiquitination. Accepts the ubiquitin from the E1 complex and catalyzes its covalent attachment to other proteins. This chain is Probable ubiquitin-conjugating enzyme E2 26 (UBC26), found in Arabidopsis thaliana (Mouse-ear cress).